A 65-amino-acid chain; its full sequence is Large ribosomal subunit protein bL35 (65 aa).

The protein belongs to the bacterial ribosomal protein bL35 family.

The chain is Large ribosomal subunit protein bL35 from Syntrophobacter fumaroxidans (strain DSM 10017 / MPOB).